Consider the following 347-residue polypeptide: tRNA N6-adenosine threonylcarbamoyltransferase (347 aa).

Positions 115 and 119 each coordinate Fe cation. Substrate contacts are provided by residues 137–141, D170, G183, and N281; that span reads LASGG. D309 contributes to the Fe cation binding site.

This sequence belongs to the KAE1 / TsaD family. The cofactor is Fe(2+).

It localises to the cytoplasm. It carries out the reaction L-threonylcarbamoyladenylate + adenosine(37) in tRNA = N(6)-L-threonylcarbamoyladenosine(37) in tRNA + AMP + H(+). Its function is as follows. Required for the formation of a threonylcarbamoyl group on adenosine at position 37 (t(6)A37) in tRNAs that read codons beginning with adenine. Is involved in the transfer of the threonylcarbamoyl moiety of threonylcarbamoyl-AMP (TC-AMP) to the N6 group of A37, together with TsaE and TsaB. TsaD likely plays a direct catalytic role in this reaction. This Methylorubrum extorquens (strain CM4 / NCIMB 13688) (Methylobacterium extorquens) protein is tRNA N6-adenosine threonylcarbamoyltransferase.